A 455-amino-acid polypeptide reads, in one-letter code: Ribulose bisphosphate carboxylase large chain (455 aa).

At Lys-5 the chain carries N6,N6,N6-trimethyllysine. Positions 114 and 164 each coordinate substrate. Lys-166 (proton acceptor) is an active-site residue. Lys-168 contributes to the substrate binding site. 3 residues coordinate Mg(2+): Lys-192, Asp-194, and Glu-195. The residue at position 192 (Lys-192) is an N6-carboxylysine. Residue His-285 is the Proton acceptor of the active site. Substrate is bound by residues Arg-286, His-318, and Ser-370.

This sequence belongs to the RuBisCO large chain family. Type I subfamily. As to quaternary structure, heterohexadecamer of 8 large chains and 8 small chains; disulfide-linked. The disulfide link is formed within the large subunit homodimers. The cofactor is Mg(2+). Post-translationally, the disulfide bond which can form in the large chain dimeric partners within the hexadecamer appears to be associated with oxidative stress and protein turnover.

Its subcellular location is the plastid. It localises to the chloroplast. The catalysed reaction is 2 (2R)-3-phosphoglycerate + 2 H(+) = D-ribulose 1,5-bisphosphate + CO2 + H2O. The enzyme catalyses D-ribulose 1,5-bisphosphate + O2 = 2-phosphoglycolate + (2R)-3-phosphoglycerate + 2 H(+). RuBisCO catalyzes two reactions: the carboxylation of D-ribulose 1,5-bisphosphate, the primary event in carbon dioxide fixation, as well as the oxidative fragmentation of the pentose substrate in the photorespiration process. Both reactions occur simultaneously and in competition at the same active site. The polypeptide is Ribulose bisphosphate carboxylase large chain (Senna didymobotrya (Popcorn cassia)).